A 1195-amino-acid polypeptide reads, in one-letter code: MPVRRGHVAPQNTFLGTIIRKFEGQNKKFIIANARVQNCAIIYCNDGFCEMTGFSRPDVMQKPCTCDFLHGPETKRHDIAQIAQALLGSEERKVEVTYYHKNGSTFICNTHIIPVKNQEGVAMMFIINFEYVTDEENAATPERVNPILPVKTVNRKLFGFKFPGLRVLTYRKQSLPQEDPDVVVIDSSKHSDDSVAMKHFKSPTKESCSPSEADDTKALIQPSQCSPLVNISGPLDHSSPKRQWDRLYPDMLQSSSQLTHSRSRESLCSIRRASSVHDIEGFSVHPKNIFRDRHASEDNGRNVKGPFNHIKSSLLGSTSDSNLNKYSTINKIPQLTLNFSDVKTEKKNTSPPSSDKTIIAPKVKERTHNVTEKVTQVLSLGADVLPEYKLQTPRINKFTILHYSPFKAVWDWLILLLVIYTAIFTPYSAAFLLNDREEQKRRECGYSCSPLNVVDLIVDIMFIIDILINFRTTYVNQNEEVVSDPAKIAIHYFKGWFLIDMVAAIPFDLLIFGSGSDETTTLIGLLKTARLLRLVRVARKLDRYSEYGAAVLMLLMCIFALIAHWLACIWYAIGNVERPYLTDKIGWLDSLGTQIGKRYNDSDSSSGPSIKDKYVTALYFTFSSLTSVGFGNVSPNTNSEKIFSICVMLIGSLMYASIFGNVSAIIQRLYSGTARYHMQMLRVKEFIRFHQIPNPLRQRLEEYFQHAWTYTNGIDMNMVLKGFPECLQADICLHLNQTLLQNCKAFRGASKGCLRALAMKFKTTHAPPGDTLVHCGDVLTALYFLSRGSIEILKDDIVVAILGKNDIFGEMVHLYAKPGKSNADVRALTYCDLHKIQREDLLEVLDMYPEFSDHFLTNLELTFNLRHESAKSQSVNDSEGDTGKLRRRRLSFESEGEKDFSKENSANDADDSTDTIRRYQSSKKHFEERKSRSSSFISSIDDEQKPLFLGTVDSTPRMVKATRLHGEETMPHSGRIHTEKRSHSCRDITDTHSWEREPARAQPEECSPSGLQRAAWGVSETESDLTYGEVEQRLDLLQEQLNRLESQMTTDIQAILQLLQKQTTVVPPAYSMVTAGAEYQRPILRLLRTSHPRASIKTDRSFSPSSQCPEFLDLEKSKLQSKESLSSGRRLNTASEDNLTSLLKQDSDASSELDPRQRKTYLHPIRHPSLPDSSLSTVGILGLHRHVSDPGLPGK.

The Cytoplasmic portion of the chain corresponds to 1-412 (MPVRRGHVAP…YSPFKAVWDW (412 aa)). One can recognise a PAS domain in the interval 41–70 (IIYCNDGFCEMTGFSRPDVMQKPCTCDFLH). Residues 92-144 (RKVEVTYYHKNGSTFICNTHIIPVKNQEGVAMMFIINFEYVTDEENAATPERV) enclose the PAC domain. Residue serine 174 is modified to Phosphoserine. The tract at residues 194–216 (SVAMKHFKSPTKESCSPSEADDT) is disordered. Phosphoserine occurs at positions 238 and 319. The chain crosses the membrane as a helical span at residues 413–433 (LILLLVIYTAIFTPYSAAFLL). Topologically, residues 434–449 (NDREEQKRRECGYSCS) are extracellular. The chain crosses the membrane as a helical span at residues 450-470 (PLNVVDLIVDIMFIIDILINF). Residues 471–494 (RTTYVNQNEEVVSDPAKIAIHYFK) lie on the Cytoplasmic side of the membrane. The chain crosses the membrane as a helical span at residues 495 to 515 (GWFLIDMVAAIPFDLLIFGSG). Topologically, residues 516–521 (SDETTT) are extracellular. A helical; Voltage-sensor membrane pass occupies residues 522–542 (LIGLLKTARLLRLVRVARKLD). The Cytoplasmic segment spans residues 543–549 (RYSEYGA). A helical transmembrane segment spans residues 550–570 (AVLMLLMCIFALIAHWLACIW). The Extracellular segment spans residues 571 to 614 (YAIGNVERPYLTDKIGWLDSLGTQIGKRYNDSDSSSGPSIKDKY). N-linked (GlcNAc...) asparagine glycosylation occurs at asparagine 600. Positions 615-635 (VTALYFTFSSLTSVGFGNVSP) form an intramembrane region, pore-forming. The Selectivity filter motif lies at 627 to 632 (SVGFGN). Over 636–641 (NTNSEK) the chain is Extracellular. A helical transmembrane segment spans residues 642 to 662 (IFSICVMLIGSLMYASIFGNV). The Cytoplasmic portion of the chain corresponds to 663-1195 (SAIIQRLYSG…HVSDPGLPGK (533 aa)). The segment at 745 to 845 (AFRGASKGCL…IQREDLLEVL (101 aa)) is cNMP-binding domain. The disordered stretch occupies residues 870-915 (AKSQSVNDSEGDTGKLRRRRLSFESEGEKDFSKENSANDADDSTDT). Residues 890–902 (LSFESEGEKDFSK) show a composition bias toward basic and acidic residues. Serine 891 and serine 894 each carry phosphoserine. The stretch at 1027–1054 (YGEVEQRLDLLQEQLNRLESQMTTDIQA) forms a coiled coil.

The protein belongs to the potassium channel family. H (Eag) (TC 1.A.1.20) subfamily. Kv11.3/KCNH7 sub-subfamily. As to quaternary structure, the potassium channel is probably composed of a homo- or heterotetrameric complex of pore-forming alpha subunits that can associate only within their subfamily.

The protein resides in the cell membrane. It catalyses the reaction K(+)(in) = K(+)(out). In terms of biological role, pore-forming (alpha) subunit of voltage-gated inwardly rectifying potassium channel. Exhibits faster activation and deactivation kinetics and slow inactivation at membrane potentials positive to 240 mV, resulting in the weakest inward rectification. The sequence is that of Voltage-gated inwardly rectifying potassium channel KCNH7 from Mus musculus (Mouse).